The following is a 286-amino-acid chain: Flagellar filament 33 kDa core protein (286 aa).

Belongs to the bacterial flagellin family. The flagellum consists of an outer layer composed of repeating units of FlaA around a core that contains several antigenically related polypeptides.

The protein localises to the periplasmic flagellum. The protein resides in the periplasm. Component of the core of the flagella. In Treponema phagedenis, this protein is Flagellar filament 33 kDa core protein.